Reading from the N-terminus, the 206-residue chain is A-type ATP synthase subunit D (206 aa).

This sequence belongs to the V-ATPase D subunit family. As to quaternary structure, has multiple subunits with at least A(3), B(3), C, D, E, F, H, I and proteolipid K(x).

The protein resides in the cell membrane. Functionally, component of the A-type ATP synthase that produces ATP from ADP in the presence of a proton gradient across the membrane. The sequence is that of A-type ATP synthase subunit D from Methanococcoides burtonii (strain DSM 6242 / NBRC 107633 / OCM 468 / ACE-M).